We begin with the raw amino-acid sequence, 426 residues long: MIKVDLQHSGLSIADLNEAKVKKVHEMIINKSGKGNDFLGWIEWPKTFDKKEYEEMKKVASSLRNKIDVLVTVGIGGSYLGIRAADEMIRGINHSDKVQVIYAGHTMSSTYVAQLSEYLKGKKFGICVISKSGTTTEPGIAFRALEKQLIEQVGVEASKELIVAVTDSSKGALKTLADNKGYPTFVIPDDIGGRFSVLTPVGIFPLLVAGVNTDNIFAGAIKAMDELVQGDLTNEAYKYAAARNALYNAGYKAEALVAYELQMQYTAEWWKQLFGESEGKDNKGLYPTSMIFSTDLHSLGQWVQEGARNVLFETVIKVKEPVANMLVEADTDNYDGLNYLSGKSFHEINSTAIEGVIDAHVNTGKMPNIVLEFDKMNDVQFGYLVYFFEIAVAMSGYLLEVNPFDQPGVEVYKYNMFKLLGKPGVK.

Glu276 functions as the Proton donor in the catalytic mechanism. Residues His297 and Lys413 contribute to the active site.

It belongs to the GPI family.

Its subcellular location is the cytoplasm. It carries out the reaction alpha-D-glucose 6-phosphate = beta-D-fructose 6-phosphate. Its pathway is carbohydrate biosynthesis; gluconeogenesis. It participates in carbohydrate degradation; glycolysis; D-glyceraldehyde 3-phosphate and glycerone phosphate from D-glucose: step 2/4. In terms of biological role, catalyzes the reversible isomerization of glucose-6-phosphate to fructose-6-phosphate. In Mesoplasma florum (strain ATCC 33453 / NBRC 100688 / NCTC 11704 / L1) (Acholeplasma florum), this protein is Glucose-6-phosphate isomerase.